Here is a 508-residue protein sequence, read N- to C-terminus: Protoporphyrinogen oxidase 2, chloroplastic/mitochondrial (508 aa).

The transit peptide at 1–22 (MASGAVADHQIEAVSGKRVAVV) directs the protein to the chloroplast and mitochondrion. FAD is bound by residues 23–28 (GAGVSG), 46–47 (EA), and 68–71 (GANT). Positions 219 to 239 (KGGKSRDTKSSPGTKKGSRGS) are disordered. FAD is bound by residues Val-268 and 475 to 477 (LSV).

Belongs to the protoporphyrinogen/coproporphyrinogen oxidase family. Protoporphyrinogen oxidase subfamily. FAD serves as cofactor.

It is found in the plastid. It localises to the chloroplast. The protein localises to the mitochondrion. The catalysed reaction is protoporphyrinogen IX + 3 O2 = protoporphyrin IX + 3 H2O2. The protein operates within porphyrin-containing compound metabolism; protoporphyrin-IX biosynthesis; protoporphyrin-IX from protoporphyrinogen-IX: step 1/1. Its pathway is porphyrin-containing compound metabolism; chlorophyll biosynthesis. In terms of biological role, catalyzes the 6-electron oxidation of protoporphyrinogen-IX to form protoporphyrin-IX. In Arabidopsis thaliana (Mouse-ear cress), this protein is Protoporphyrinogen oxidase 2, chloroplastic/mitochondrial (PPOX2).